We begin with the raw amino-acid sequence, 285 residues long: Xanthoxin dehydrogenase (285 aa).

An N-acetylserine modification is found at serine 2.

The protein belongs to the short-chain dehydrogenases/reductases (SDR) family. In terms of tissue distribution, predominantly in roots and stems, and at lower levels in leaves and seeds.

Its subcellular location is the cytoplasm. It catalyses the reaction 2-cis,4-trans-xanthoxin + NAD(+) = 2-cis-(+)-abscisic aldehyde + NADH + H(+). It carries out the reaction 2-trans,4-trans-xanthoxin + NAD(+) = 2-trans-(+)-abscisic aldehyde + NADH + H(+). Involved in the biosynthesis of abscisic acid. Catalyzes the conversion of xanthoxin to abscisic aldehyde. In Arabidopsis thaliana (Mouse-ear cress), this protein is Xanthoxin dehydrogenase.